The sequence spans 284 residues: Bifunctional protein FolD (284 aa).

Residues 165 to 167 (GRS) and S190 contribute to the NADP(+) site.

It belongs to the tetrahydrofolate dehydrogenase/cyclohydrolase family. As to quaternary structure, homodimer.

It catalyses the reaction (6R)-5,10-methylene-5,6,7,8-tetrahydrofolate + NADP(+) = (6R)-5,10-methenyltetrahydrofolate + NADPH. It carries out the reaction (6R)-5,10-methenyltetrahydrofolate + H2O = (6R)-10-formyltetrahydrofolate + H(+). It participates in one-carbon metabolism; tetrahydrofolate interconversion. Catalyzes the oxidation of 5,10-methylenetetrahydrofolate to 5,10-methenyltetrahydrofolate and then the hydrolysis of 5,10-methenyltetrahydrofolate to 10-formyltetrahydrofolate. This chain is Bifunctional protein FolD, found in Streptococcus sanguinis (strain SK36).